An 890-amino-acid polypeptide reads, in one-letter code: Leucine-rich repeat receptor-like tyrosine-protein kinase PXC3 (890 aa).

An N-terminal signal peptide occupies residues 1–23; the sequence is MTFWCMSILLIVGFLSKSELCEA. The Extracellular segment spans residues 24–534; that stretch reads QLSDEATLVA…LRYNHRVSYR (511 aa). N-linked (GlcNAc...) asparagine glycosylation is found at N46, N61, N78, and N108. LRR repeat units follow at residues 67–85, 86–108, 110–132, 133–157, 159–181, 182–205, 206–229, 231–254, 256–276, 278–300, 301–325, 326–349, 350–373, 375–397, 399–421, 422–446, 447–469, and 471–492; these read MLDL…ISDL, RSLK…SFGN, SELE…EFGK, LRGL…LKVL, RLEE…VGNL, SSLR…LGLV, SELE…IFEK, KLKV…GICS, LSSI…TIGN, SGLT…EFSK, CSNL…LGQL, INLQ…FLGS, GNLN…LCSM, RLQY…IGNC, KLLQ…IGRM, RNLQ…LGKL, DKLV…LLKG, and MSLI…VFVP. N-linked (GlcNAc...) asparagine glycans are attached at residues N140, N171, and N180. Residues N276, N289, and N303 are each glycosylated (N-linked (GlcNAc...) asparagine). N-linked (GlcNAc...) asparagine glycosylation is present at N363. N-linked (GlcNAc...) asparagine glycosylation occurs at N429. N-linked (GlcNAc...) asparagine glycosylation is found at N477 and N498. A helical transmembrane segment spans residues 535–555; the sequence is IVLAVIGSGVAVFVSVTVVVL. Over 556 to 890 the chain is Cytoplasmic; sequence LFMMREKQEK…EMLQEVKQIK (335 aa). Positions 608–886 constitute a Protein kinase domain; sequence MKESNKLSTG…KKVVEMLQEV (279 aa). ATP is bound by residues 614 to 622 and K636; that span reads LSTGTFSSV. D735 serves as the catalytic Proton acceptor.

Belongs to the protein kinase superfamily. Tyr protein kinase family. Expressed in the vascular strands of cotyledons, the shoot apex, hypocotyls, roots, leaves, stems and flowers.

It is found in the cell membrane. The catalysed reaction is L-tyrosyl-[protein] + ATP = O-phospho-L-tyrosyl-[protein] + ADP + H(+). In terms of biological role, leucine-rich repeat receptor-like protein kinase that may play a role in vascular tissues development. This is Leucine-rich repeat receptor-like tyrosine-protein kinase PXC3 from Arabidopsis thaliana (Mouse-ear cress).